A 122-amino-acid polypeptide reads, in one-letter code: Large ribosomal subunit protein bL12 (122 aa).

Residues 94–122 (GNVKEGLSKEDAEEMKEKLEEAGATVELK) are disordered. Residues 99 to 114 (GLSKEDAEEMKEKLEE) show a composition bias toward basic and acidic residues.

The protein belongs to the bacterial ribosomal protein bL12 family. Homodimer. Part of the ribosomal stalk of the 50S ribosomal subunit. Forms a multimeric L10(L12)X complex, where L10 forms an elongated spine to which 2 to 4 L12 dimers bind in a sequential fashion. Binds GTP-bound translation factors.

Functionally, forms part of the ribosomal stalk which helps the ribosome interact with GTP-bound translation factors. Is thus essential for accurate translation. The polypeptide is Large ribosomal subunit protein bL12 (Halanaerobium praevalens).